A 282-amino-acid polypeptide reads, in one-letter code: Small ribosomal subunit protein uS3 (282 aa).

The KH type-2 domain occupies 43 to 111; sequence IRQLMSTGME…QVQLNILEVK (69 aa). The segment at 218–282 is disordered; sequence QQAASAPSRG…AAVATEGSDA (65 aa). Positions 230-262 are enriched in basic and acidic residues; the sequence is PRRDGDDRGPRRENSGPRRDGGNLRSQRNDRNE. The segment covering 263–276 has biased composition (low complexity); that stretch reads NAAVEAAPAAAAVA.

Belongs to the universal ribosomal protein uS3 family. In terms of assembly, part of the 30S ribosomal subunit. Forms a tight complex with proteins S10 and S14.

Functionally, binds the lower part of the 30S subunit head. Binds mRNA in the 70S ribosome, positioning it for translation. The chain is Small ribosomal subunit protein uS3 from Renibacterium salmoninarum (strain ATCC 33209 / DSM 20767 / JCM 11484 / NBRC 15589 / NCIMB 2235).